We begin with the raw amino-acid sequence, 428 residues long: 3-phosphoshikimate 1-carboxyvinyltransferase (428 aa).

3 residues coordinate 3-phosphoshikimate: Lys-22, Ser-23, and Arg-27. Residue Lys-22 participates in phosphoenolpyruvate binding. Phosphoenolpyruvate contacts are provided by Gly-95 and Arg-123. 3-phosphoshikimate contacts are provided by Ser-170, Ser-171, Gln-172, Ser-197, Asp-316, and Lys-343. Gln-172 serves as a coordination point for phosphoenolpyruvate. Residue Asp-316 is the Proton acceptor of the active site. Positions 347, 390, and 414 each coordinate phosphoenolpyruvate.

It belongs to the EPSP synthase family. As to quaternary structure, monomer.

It is found in the cytoplasm. It catalyses the reaction 3-phosphoshikimate + phosphoenolpyruvate = 5-O-(1-carboxyvinyl)-3-phosphoshikimate + phosphate. Its pathway is metabolic intermediate biosynthesis; chorismate biosynthesis; chorismate from D-erythrose 4-phosphate and phosphoenolpyruvate: step 6/7. Functionally, catalyzes the transfer of the enolpyruvyl moiety of phosphoenolpyruvate (PEP) to the 5-hydroxyl of shikimate-3-phosphate (S3P) to produce enolpyruvyl shikimate-3-phosphate and inorganic phosphate. In Laribacter hongkongensis (strain HLHK9), this protein is 3-phosphoshikimate 1-carboxyvinyltransferase.